We begin with the raw amino-acid sequence, 330 residues long: Transcriptional regulatory protein PHO23 (330 aa).

The disordered stretch occupies residues 139–272; the sequence is EKIESKSNSK…NSNNSRISRP (134 aa). Positions 231–254 are enriched in polar residues; that stretch reads TAVSPSTISTATAVNNGRIGTSTA. The span at 255–269 shows a compositional bias: low complexity; sequence SRGVSSVGNSNNSRI. The segment at 280 to 329 adopts a PHD-type zinc-finger fold; that stretch reads PLYCYCNQVAYGEMVGCDGADCELEWFHLPCIGLETLPKGKWYCDDCKKK. Zn(2+) is bound by residues C283, C285, C296, C301, H307, C310, C323, and C326.

It belongs to the ING family. Interacts with H3K4me3 and to a lesser extent with H3K4me2. Component of the RPD3C(L) complex composed of at least ASH1, CTI6, DEP1, PHO23, RPD3, RXT2, RXT3, SAP30, SDS3, SIN3, UME1 and UME6.

Its subcellular location is the nucleus. In terms of biological role, component of the RPD3C(L) histone deacetylase complex (HDAC) responsible for the deacetylation of lysine residues on the N-terminal part of the core histones (H2A, H2B, H3 and H4). Histone deacetylation gives a tag for epigenetic repression and plays an important role in transcriptional regulation, cell cycle progression and developmental events. This Saccharomyces cerevisiae (strain ATCC 204508 / S288c) (Baker's yeast) protein is Transcriptional regulatory protein PHO23 (PHO23).